The following is a 458-amino-acid chain: MTFRKSFDCYDFYDRAKVGEKCTQDDWDLMKIPMKAMELKQKYGLDFKGEFVPTDKDMMEKLFQAGFEMLLECGIYCTDTHRIVKYTEDEIWDAINNVQKEFTLGTGRDAVNVRKRSVGDKRKPIVQGGPTGSPISEEVFMPVHMSYALEREVDTIVDGVMTSVRGKAPIPGSPYEVLAAKTETRLIKQACAMAGRPGMGIOGPETSLSAQGNISSDCMGGQISSDSHEVSQLNELKIDLDAIAVIAHYKGNSDIIMDEQMPIFGGYAGGIEETTIVDIATHINAFVMSSASWHLDGPVHIRWGSTNTRETLTIAGWACATISEFTDMLSGNQYYPCAGPCTEMCLLEASAQSITDTASGREILSGVASAKGVVTDKTTGMEARMMGEVARATAGMEISEVNKVLNALVPLYEKNYATAPAGKTFQECYDVKTITPTEEYMQVYDGARKKLEDLGLVF.

Position 202 (O202) is a non-standard amino acid, pyrrolysine.

This sequence belongs to the monomethylamine methyltransferase family. As to quaternary structure, can form a complex with MtmC.

It catalyses the reaction Co(I)-[methylamine-specific corrinoid protein] + methylamine + H(+) = methyl-Co(III)-[methylamine-specific corrinoid protein] + NH4(+). Its pathway is one-carbon metabolism; methanogenesis from methylamine. Catalyzes the transfer of the methyl group from monomethylamine to the corrinoid cofactor of MtmC. The sequence is that of Monomethylamine methyltransferase MtmB (mtmB1) from Methanosarcina mazei (strain ATCC BAA-159 / DSM 3647 / Goe1 / Go1 / JCM 11833 / OCM 88) (Methanosarcina frisia).